The sequence spans 210 residues: Large ribosomal subunit protein uL4 (210 aa).

The segment at 56–80 (FVSGGGKKPWRQKGTGRARAGSTRS) is disordered.

It belongs to the universal ribosomal protein uL4 family. Part of the 50S ribosomal subunit.

Its function is as follows. One of the primary rRNA binding proteins, this protein initially binds near the 5'-end of the 23S rRNA. It is important during the early stages of 50S assembly. It makes multiple contacts with different domains of the 23S rRNA in the assembled 50S subunit and ribosome. Functionally, forms part of the polypeptide exit tunnel. This Solidesulfovibrio magneticus (strain ATCC 700980 / DSM 13731 / RS-1) (Desulfovibrio magneticus) protein is Large ribosomal subunit protein uL4.